A 161-amino-acid chain; its full sequence is Phosphopantetheine adenylyltransferase (161 aa).

Thr-10 lines the substrate pocket. ATP contacts are provided by residues 10-11 and His-18; that span reads TF. Residues Lys-42, Met-74, and Arg-88 each contribute to the substrate site. ATP is bound by residues 89–91, Glu-99, and 124–130; these read GLR and WSFISSS.

This sequence belongs to the bacterial CoaD family. As to quaternary structure, homohexamer. Mg(2+) serves as cofactor.

The protein localises to the cytoplasm. The enzyme catalyses (R)-4'-phosphopantetheine + ATP + H(+) = 3'-dephospho-CoA + diphosphate. Its pathway is cofactor biosynthesis; coenzyme A biosynthesis; CoA from (R)-pantothenate: step 4/5. In terms of biological role, reversibly transfers an adenylyl group from ATP to 4'-phosphopantetheine, yielding dephospho-CoA (dPCoA) and pyrophosphate. The sequence is that of Phosphopantetheine adenylyltransferase from Serratia marcescens.